We begin with the raw amino-acid sequence, 589 residues long: Protein NRT1/ PTR FAMILY 7.2 (589 aa).

Transmembrane regions (helical) follow at residues 32–52 and 78–98; these read WLTA…FFGV and WTGT…SYWG. Position 102 is a phosphothreonine (Thr102). 10 helical membrane-spanning segments follow: residues 105–125, 147–167, 187–207, 217–237, 343–363, 377–397, 423–443, 464–484, 504–524, and 548–568; these read IFQA…GALL, VLFY…QPNI, IAFF…SNTV, WPLG…LFLI, IWLC…LFVV, IPAS…IFAY, MGIG…VEIH, IFWQ…MYVG, LCMA…SIVM, and FYFL…ICAK.

It belongs to the major facilitator superfamily. Proton-dependent oligopeptide transporter (POT/PTR) (TC 2.A.17) family. As to expression, expressed in xylem parenchyma cells within the vasculature. Expressed in siliques and flowers. Higher expression in shoots than in roots.

The protein resides in the cell membrane. In terms of biological role, low-affinity nitrate transporter. Involved in nitrate removal from xylem sap. Not involved in oligopeptides transport. This is Protein NRT1/ PTR FAMILY 7.2 (NPF7.2) from Arabidopsis thaliana (Mouse-ear cress).